The following is a 101-amino-acid chain: Small ribosomal subunit protein uS14 (101 aa).

Belongs to the universal ribosomal protein uS14 family. In terms of assembly, part of the 30S ribosomal subunit. Contacts proteins S3 and S10.

Its function is as follows. Binds 16S rRNA, required for the assembly of 30S particles and may also be responsible for determining the conformation of the 16S rRNA at the A site. In Escherichia coli O8 (strain IAI1), this protein is Small ribosomal subunit protein uS14.